The chain runs to 146 residues: Stress-responsive DNAJB4-interacting membrane protein 1 (146 aa).

The first 26 residues, Met1 to Gly26, serve as a signal peptide directing secretion. Residues Cys27–Pro66 lie on the Extracellular side of the membrane. Residues Pro67–Ile87 form a helical membrane-spanning segment. Residues Ser88–Gln94 are Cytoplasmic-facing. The helical transmembrane segment at Val95 to Ser115 threads the bilayer. At His116 to Ile146 the chain is on the extracellular side.

In terms of assembly, homodimer. Interacts with DNAJB4. In terms of tissue distribution, expressed in brain with higher detection in neurons than astrocytes. Decreased expression in Alzheimer brains. Detected at protein level in brain and cervix.

The protein localises to the membrane. Promotes neuronal cells survival to stress conditions. The protein is Stress-responsive DNAJB4-interacting membrane protein 1 (SDIM1) of Homo sapiens (Human).